Consider the following 1200-residue polypeptide: MGAMAYSLLFCLLLAHLGLGEVGASLDPPGRPDSPRERTPRGKQHGQQLPRASAPDPSIPWSRSTDGTILAQKLAEEVPVDVASYLYTGDFHQLKRANCSGRYELAGLPGKSPSLASSHPSLHGALDTLTHATNFLNMMLQSNKSREQTVQDDLQWYQALVRSLLEGEPSISRAAITFSTESLSTPAPQVFLQATREESRILLQDLSSSAHHLANATLETEWFHGLRRKWRPHLHRRGSNQGPRGLGHSWRRRDGLGGDRSHVKWSPPYLECENGSYKPGWLVTLSAAFYGLQPNLVPEFRGVMKVDISLQKVDIDQCSSDGWFSGTHKCHLNNSECMPIKGLGFVLGAYQCICKAGFYHPRVFSVNNFQRRGPDHHFSGSTKDVSEETHVCLPCREGCPFCADDRPCFVQEDKYLRLAIISFQALCMLLDFVSMLVVYHFRKAKSIRASGLILLETILFGSLLLYFPVVILYFEPSTFRCILLRWARLLGFATVYGTVTLKLHRVLKVFLSRTAQRIPYMTGGRVMRMLAVIVLVVFWFLVGWTSSMCQNLERDILLVGQGQTSDHLTFNMCLIDRWDYMTAVAEFLFLLWGIYLCYAVRTVPSAFHEPRYMAVAVHNELIITAIFHTIRFVLASRLQPDWMLMLYFAHAHLTVTVTIGLLLIPKFSHSSNNPRDDIATEAYEDELDMGRSGSYLNSSINSAWSEHSLDPEDIRDELKKLYAQLEIYKRKKMITNNPHLQKKRCSKKGLGRSIMRRITEIPETVSRQCSKEDKEGTDHSAAKGTGLVRKNPTESSGNTGRPKEESLKNRVFSLKKSHSTYDHVRDQTVESSSLPMESQEEEATENSTLESLSSKKLTQKLKEDSEAESTESVPLVCKSASAHNLSSEKKPGHPRTSMLQKSLSVIASAKEKTLGLAGKTQTLVMEDRAKSQKPKDRETIRKYSNSDNVETIPNSGHMEEPRKPQKSGIMKQQRVSLPTANPDVSSGITQIKDNFDIGEVCPWEVYDLTPGPMPSEPKAQKHVSIAASEVEQNPASFLKEKSYHKSKATEGLYQANHKSIDKTEVCPWEIHSQSLLEDENRLISKTPVLPGRAREENGSQLYTTNMCAGQYEELPHKVVAPKVENENLNQMGDQEKQTSSSVDIIPGSCNSSNNSHQPLTSRAEVCPWEFEPLEQPNAERSVTLPASSALSANKIPGPQK.

The first 24 residues, 1–24 (MGAMAYSLLFCLLLAHLGLGEVGA), serve as a signal peptide directing secretion. Residues 25-62 (SLDPPGRPDSPRERTPRGKQHGQQLPRASAPDPSIPWS) are disordered. At 25-417 (SLDPPGRPDS…CFVQEDKYLR (393 aa)) the chain is on the extracellular side. The interval 85–281 (YLYTGDFHQL…CENGSYKPGW (197 aa)) is cache-like region. Residues asparagine 98 and asparagine 143 are each glycosylated (N-linked (GlcNAc...) asparagine). Cysteine 99 and cysteine 272 form a disulfide bridge. 2 residues coordinate glycine: serine 172 and arginine 173. Asparagine 215 carries N-linked (GlcNAc...) asparagine glycosylation. The disordered stretch occupies residues 234 to 253 (LHRRGSNQGPRGLGHSWRRR). Glutamate 271 is a binding site for glycine. An N-linked (GlcNAc...) asparagine glycan is attached at asparagine 274. Residue aspartate 307 participates in glycine binding. N-linked (GlcNAc...) asparagine glycosylation is present at asparagine 333. A helical membrane pass occupies residues 418–439 (LAIISFQALCMLLDFVSMLVVY). The Cytoplasmic segment spans residues 440 to 451 (HFRKAKSIRASG). A helical transmembrane segment spans residues 452–474 (LILLETILFGSLLLYFPVVILYF). Residues 475-478 (EPST) are Extracellular-facing. Residues 479 to 501 (FRCILLRWARLLGFATVYGTVTL) traverse the membrane as a helical segment. Cysteines 481 and 573 form a disulfide. Over 502 to 525 (KLHRVLKVFLSRTAQRIPYMTGGR) the chain is Cytoplasmic. A helical membrane pass occupies residues 526–547 (VMRMLAVIVLVVFWFLVGWTSS). At 548–576 (MCQNLERDILLVGQGQTSDHLTFNMCLID) the chain is on the extracellular side. Residues 577–597 (RWDYMTAVAEFLFLLWGIYLC) traverse the membrane as a helical segment. The Cytoplasmic portion of the chain corresponds to 598–611 (YAVRTVPSAFHEPR). The chain crosses the membrane as a helical span at residues 612–633 (YMAVAVHNELIITAIFHTIRFV). At 634–642 (LASRLQPDW) the chain is on the extracellular side. A helical membrane pass occupies residues 643–664 (MLMLYFAHAHLTVTVTIGLLLI). Residues 665-1200 (PKFSHSSNNP…SANKIPGPQK (536 aa)) lie on the Cytoplasmic side of the membrane. Serine 694, serine 705, and serine 708 each carry phosphoserine. The interval 757-875 (RITEIPETVS…EAESTESVPL (119 aa)) is disordered. 2 stretches are compositionally biased toward basic and acidic residues: residues 769–781 (CSKE…DHSA) and 819–828 (STYDHVRDQT). Residue lysine 774 forms a Glycyl lysine isopeptide (Lys-Gly) (interchain with G-Cter in ubiquitin) linkage. The span at 845–856 (ENSTLESLSSKK) shows a compositional bias: low complexity. Serine 865 and serine 944 each carry phosphoserine. Residues 947 to 988 (DNVETIPNSGHMEEPRKPQKSGIMKQQRVSLPTANPDVSSGI) are disordered. The span at 973-988 (QRVSLPTANPDVSSGI) shows a compositional bias: polar residues. Positions 1000–1004 (VCPWE) match the VCPWE motif 1 motif. Serine 1059 is modified (phosphoserine). Residues 1065–1069 (VCPWE) carry the VCPWE motif 2 motif. Serine 1074 is subject to Phosphoserine. Positions 1130–1160 (QMGDQEKQTSSSVDIIPGSCNSSNNSHQPLT) are disordered. The short motif at 1165-1169 (VCPWE) is the VCPWE motif 3 element. Residues 1177 to 1200 (NAERSVTLPASSALSANKIPGPQK) form a disordered region. The segment covering 1178-1191 (AERSVTLPASSALS) has biased composition (polar residues).

The protein belongs to the G-protein coupled receptor 3 family. In terms of assembly, homodimer. Associates with the RGS7-GNB5 complex, promoting its localization to the cell membrane and regulating its GTPase activator activity. Interacts (via VCPWE motifs) with GNAO1. Interacts with GPC4. Interacts with EGFLAM. As to expression, highly expressed in brain. Expressed in several brain regions including the cerebral cortex, hippocampus, cerebellum and caudate putamen. Only expressed in neurons, and not in microglia, oligodendrocytes or astrocytes. Expressed in the visual center of the cerebral cortex. Also expressed in the eye, including photoreceptors, ganglion cells and trabecular meshwork.

The protein localises to the cell membrane. Its subcellular location is the postsynaptic cell membrane. It is found in the presynaptic cell membrane. The protein resides in the nucleus. Functionally, metabotropic receptor for glycine that controls synapse formation and function in the brain. Acts as an atypical G-protein coupled receptor that recruits and regulates the RGS7-GNB5 complex instead of activating G proteins. In absence of glycine ligand, promotes the GTPase activator activity of RGS7, increasing the GTPase activity of G protein alpha subunits, thereby driving them into their inactive GDP-bound form. Glycine-binding changes the conformation of the intracellular surface, inhibiting the GTPase activator activity of the RGS7-GNB5 complex, promoting G protein alpha subunits into their active GTP-bound form and regulating cAMP levels. Also able to bind taurine, a compound closely related to glycine, but with a two-fold lower affinity. Glycine receptor-dependent regulation of cAMP controls key ion channels, kinases and neurotrophic factors involved in neuronal excitability and synaptic transmission. Plays a pivotal role in regulating mood and cognition via its ability to regulate neuronal excitability in L2/L3 pyramidal neurons of the prefrontal cortex. Also involved in spatial learning by regulating hippocampal CA1 neuronal excitability. Acts as a synaptic organizer in the hippocampus, required for proper mossy fiber-CA3 neurocircuitry establishment, structure and function: induces presynaptic differentiation in contacting axons via its interaction with GPC4. In addition to glycine, may also act as a receptor for osteocalcin (Bglap or Bglap2) hormone: osteocalcin-binding initiates a signaling response that prevents neuronal apoptosis in the hippocampus and regulates the synthesis of neurotransmitters. In Mus musculus (Mouse), this protein is Metabotropic glycine receptor.